A 59-amino-acid chain; its full sequence is UPF0434 protein VS_2060 (59 aa).

The protein belongs to the UPF0434 family.

The sequence is that of UPF0434 protein VS_2060 from Vibrio atlanticus (strain LGP32) (Vibrio splendidus (strain Mel32)).